Here is a 353-residue protein sequence, read N- to C-terminus: Photosystem II D2 protein (353 aa).

The residue at position 2 (T2) is an N-acetylthreonine. T2 is subject to Phosphothreonine. The chain crosses the membrane as a helical span at residues 41-61 (CAYFALGGWFTGTTFVTSWYT). H118 lines the chlorophyll a pocket. Residues 125–141 (GFMLRQFELARSVQLRP) traverse the membrane as a helical segment. Q130 and N143 together coordinate pheophytin a. The chain crosses the membrane as a helical span at residues 153 to 166 (VFVSVFLIYPLGQS). H198 provides a ligand contact to chlorophyll a. Residues 208 to 228 (AALLCAIHGATVENTLFEDGD) form a helical membrane-spanning segment. The a plastoquinone site is built by H215 and F262. H215 contacts Fe cation. H269 contributes to the Fe cation binding site. The chain crosses the membrane as a helical span at residues 279-295 (GLWMSAIGVVGLALNLR).

The protein belongs to the reaction center PufL/M/PsbA/D family. PSII is composed of 1 copy each of membrane proteins PsbA, PsbB, PsbC, PsbD, PsbE, PsbF, PsbH, PsbI, PsbJ, PsbK, PsbL, PsbM, PsbT, PsbX, PsbY, PsbZ, Psb30/Ycf12, at least 3 peripheral proteins of the oxygen-evolving complex and a large number of cofactors. It forms dimeric complexes. Requires The D1/D2 heterodimer binds P680, chlorophylls that are the primary electron donor of PSII, and subsequent electron acceptors. It shares a non-heme iron and each subunit binds pheophytin, quinone, additional chlorophylls, carotenoids and lipids. There is also a Cl(-1) ion associated with D1 and D2, which is required for oxygen evolution. The PSII complex binds additional chlorophylls, carotenoids and specific lipids. as cofactor. Phosphorylated on threonine residue(s); phosphorylation increases with increasing light levels.

Its subcellular location is the plastid. It is found in the chloroplast thylakoid membrane. It carries out the reaction 2 a plastoquinone + 4 hnu + 2 H2O = 2 a plastoquinol + O2. In terms of biological role, photosystem II (PSII) is a light-driven water:plastoquinone oxidoreductase that uses light energy to abstract electrons from H(2)O, generating O(2) and a proton gradient subsequently used for ATP formation. It consists of a core antenna complex that captures photons, and an electron transfer chain that converts photonic excitation into a charge separation. The D1/D2 (PsbA/PsbD) reaction center heterodimer binds P680, the primary electron donor of PSII as well as several subsequent electron acceptors. D2 is needed for assembly of a stable PSII complex. This Marchantia polymorpha (Common liverwort) protein is Photosystem II D2 protein.